The chain runs to 732 residues: Ferric aerobactin receptor (732 aa).

The first 25 residues, M1–A25, serve as a signal peptide directing secretion. The TonB box signature appears at E31 to N38. One can recognise a TBDR plug domain in the interval T43 to K153. The TBDR beta-barrel domain occupies E158 to F732. Residues Y715 to F732 carry the TonB C-terminal box motif.

This sequence belongs to the TonB-dependent receptor family.

It is found in the cell outer membrane. Receptor for cloacin DF13/aerobactin. In Escherichia coli, this protein is Ferric aerobactin receptor (iutA).